The primary structure comprises 384 residues: 8-amino-7-oxononanoate synthase (384 aa).

Residue arginine 21 participates in substrate binding. Residue 108 to 109 (GF) participates in pyridoxal 5'-phosphate binding. Histidine 133 is a substrate binding site. Positions 179, 207, and 233 each coordinate pyridoxal 5'-phosphate. N6-(pyridoxal phosphate)lysine is present on lysine 236. Threonine 352 is a substrate binding site.

This sequence belongs to the class-II pyridoxal-phosphate-dependent aminotransferase family. BioF subfamily. Homodimer. It depends on pyridoxal 5'-phosphate as a cofactor.

The catalysed reaction is 6-carboxyhexanoyl-[ACP] + L-alanine + H(+) = (8S)-8-amino-7-oxononanoate + holo-[ACP] + CO2. The protein operates within cofactor biosynthesis; biotin biosynthesis. In terms of biological role, catalyzes the decarboxylative condensation of pimeloyl-[acyl-carrier protein] and L-alanine to produce 8-amino-7-oxononanoate (AON), [acyl-carrier protein], and carbon dioxide. This chain is 8-amino-7-oxononanoate synthase, found in Escherichia coli (strain SE11).